Reading from the N-terminus, the 130-residue chain is Small ribosomal subunit protein uS9 (130 aa).

The segment at 105–130 (TRDPRMKERKKYGLHKARKAPQYSKR) is disordered. A compositionally biased stretch (basic residues) spans 111-130 (KERKKYGLHKARKAPQYSKR).

The protein belongs to the universal ribosomal protein uS9 family.

In Syntrophomonas wolfei subsp. wolfei (strain DSM 2245B / Goettingen), this protein is Small ribosomal subunit protein uS9.